The following is a 237-amino-acid chain: UPF0758 protein Veis_1654 (237 aa).

Positions 115–237 (VFDTPDAVKH…ALSMAEMGLL (123 aa)) constitute an MPN domain. H186, H188, and D199 together coordinate Zn(2+). Positions 186-199 (HNHPSGSVQPSRAD) match the JAMM motif motif.

It belongs to the UPF0758 family.

The polypeptide is UPF0758 protein Veis_1654 (Verminephrobacter eiseniae (strain EF01-2)).